The sequence spans 144 residues: MASTGSAQKETLNKFISGWKNANAEEMLAVASDDYTQQTLPFSLGHDVRPKQVAEVMLPKLYSILENYELKIHQVVHDVENQKAAVYAISKADTPFGFPWLNEFSAFITFNNAGDKVVNVQEMVDTEFFQKFFPAYQSFLSQNK.

Belongs to the avfA family.

It participates in secondary metabolite biosynthesis. Functionally, monooxygenase; part of the gene cluster that mediates the biosynthesis of pestheic acid, a diphenyl ether which is a biosynthetic precursor of the unique chloropupukeananes. The biosynthesis initiates from condensation of acetate and malonate units catalyzed by the non-reducing PKS ptaA. As the ptaA protein is TE/CLC domain-deficient, hydrolysis and Claisen cyclization of the polyketide could be catalyzed by ptaB containing a beta-lactamase domain. The ptaB protein might hydrolyze the thioester bond between the ACP of ptaA and the intermediate to release atrochrysone carboxylic acid, which is spontaneously dehydrated to form endocrocin anthrone. Endocrocin anthrone is then converted to endocrocin, catalyzed by the anthrone oxygenase ptaC. Spontaneous decarboxylation of endocrocin occurs to generate emodin. An O-methyltransferase (ptaH or ptaI) could methylate emodin to form physcion. PtaJ could then catalyze the oxidative cleavage of physcion, and rotation of the intermediate could then afford desmethylisosulochrin. PtaF, a putative NADH-dependent oxidoreductase, might also participate in the oxidative cleavage step. Desmethylisosulochrin is then transformed by another O-methyltransferase (ptaH or ptaI) to form isosulochrin. Chlorination of isosulochrin by ptaM in the cyclohexadienone B ring then produces chloroisosulochrin. PtaE is responsible for the oxidative coupling reactions of both benzophenones isosulochrin and chloroisosulochrin to RES-1214-1 and pestheic acid respectively, regardless of chlorination. The sequence is that of Monooxygenase ptaG from Pestalotiopsis fici (strain W106-1 / CGMCC3.15140).